A 197-amino-acid polypeptide reads, in one-letter code: CASP-like protein 1B2 (197 aa).

An N-acetylalanine modification is found at Ala2. The Cytoplasmic segment spans residues 2–17 (AREKIVVAGGSTKSWK). The helical transmembrane segment at 18–38 (LLLGLRVFAFMATLAAAIVMS) threads the bilayer. The Extracellular segment spans residues 39-69 (LNKETKTLVVATIGTLPIKATLTAKFQDTPA). Residues 70-90 (FVFFVIANVMVSFHNLLMIVL) traverse the membrane as a helical segment. Topologically, residues 91–106 (QIFSRKLEYKGVRLLS) are cytoplasmic. A helical transmembrane segment spans residues 107 to 127 (IAILDMLNATLVSAAANAAVF). Topologically, residues 128-156 (VAELGKNGNKHAKWNKVCDRFATYCDHGA) are extracellular. Residues 157–177 (GALIAAFAGVILMLLVSSVSI) traverse the membrane as a helical segment. Residues 178 to 197 (SRLLINSKHLSTTATTTAVV) are Cytoplasmic-facing.

It belongs to the Casparian strip membrane proteins (CASP) family. As to quaternary structure, homodimer and heterodimers.

It localises to the cell membrane. This is CASP-like protein 1B2 from Arabidopsis lyrata subsp. lyrata (Lyre-leaved rock-cress).